The sequence spans 301 residues: Probable alpha-L-glutamate ligase 2 (301 aa).

One can recognise an ATP-grasp domain in the interval 104-287 (LQLLSRKGIG…VTEPIVEYIE (184 aa)). ATP contacts are provided by residues Lys141, 178–179 (EY), Asp187, and 211–213 (RSN). Positions 248, 260, and 262 each coordinate Mg(2+). Mn(2+)-binding residues include Asp248, Glu260, and Asn262.

The protein belongs to the RimK family. Requires Mg(2+) as cofactor. The cofactor is Mn(2+).

The polypeptide is Probable alpha-L-glutamate ligase 2 (Shewanella baltica (strain OS195)).